The chain runs to 299 residues: Nicotinate-nucleotide pyrophosphorylase [carboxylating] (299 aa).

An important for hexamer formation region spans residues 8 to 12; that stretch reads LLLPP. Residues Arg102, 138-139, 160-161, Lys171, Glu201, Asp222, 248-250, and Gly270 each bind quinolinate; these read RK, HR, and SGG.

It belongs to the NadC/ModD family. In terms of assembly, hexamer formed by 3 homodimers.

The catalysed reaction is nicotinate beta-D-ribonucleotide + CO2 + diphosphate = quinolinate + 5-phospho-alpha-D-ribose 1-diphosphate + 2 H(+). It functions in the pathway cofactor biosynthesis; NAD(+) biosynthesis; nicotinate D-ribonucleotide from quinolinate: step 1/1. Its function is as follows. Involved in the catabolism of quinolinic acid (QA). This is Nicotinate-nucleotide pyrophosphorylase [carboxylating] from Sus scrofa (Pig).